The chain runs to 274 residues: Rhamnulose-1-phosphate aldolase (274 aa).

Glu117 is an active-site residue. Positions 141, 143, and 212 each coordinate Zn(2+).

Belongs to the aldolase class II family. RhaD subfamily. In terms of assembly, homotetramer. Requires Zn(2+) as cofactor.

The protein localises to the cytoplasm. It carries out the reaction L-rhamnulose 1-phosphate = (S)-lactaldehyde + dihydroxyacetone phosphate. The protein operates within carbohydrate degradation; L-rhamnose degradation; glycerone phosphate from L-rhamnose: step 3/3. Its function is as follows. Catalyzes the reversible cleavage of L-rhamnulose-1-phosphate to dihydroxyacetone phosphate (DHAP) and L-lactaldehyde. The chain is Rhamnulose-1-phosphate aldolase from Pectobacterium atrosepticum (strain SCRI 1043 / ATCC BAA-672) (Erwinia carotovora subsp. atroseptica).